The primary structure comprises 266 residues: Norfluorocurarine synthase 2 (266 aa).

Residues 11 to 121 enclose the AB hydrolase-1 domain; the sequence is HFVLVHGAGH…VMPDSTHPPN (111 aa). Residues S86, D216, and H244 contribute to the active site.

It belongs to the AB hydrolase superfamily. In terms of assembly, homodimer.

It catalyses the reaction 17-dehydropreakuammicine + H2O = norfluorocurarine + methanol + CO2. Its pathway is alkaloid biosynthesis. Its function is as follows. Hydrolase involved in the biosynthesis of curare monoterpene indole alkaloids (MIAs), natural products such as diaboline, a pharmacologically active compound used to regulate blood pressure. Curare alkaloids act as animal glycine receptor antagonists. Catalyzes the conversion of dehydropreakuammicine to norfluorocurarine. The polypeptide is Norfluorocurarine synthase 2 (Strychnos sp).